A 420-amino-acid polypeptide reads, in one-letter code: MAKFDILEDLKWRGAINQETDEEGLRKYLAEHDDLALYCGTDPTGDSLHIGHLIPFMILKRFQMAGYHPVILIGGGTGAIGDPSGRTTERVLQTAEQVKHNEESLTNQMKKLFGTENFEIRNNAEWLGKINLIDFLRDYGKYFQVNNMINKDVVASRLENGISFTEFTYQILQAIDFYHLNKDDGVQLQIGGGDQWGNITAGIDLIHKLEGSDRPAFGLTIPLMLKADGTKFGKSAGGAVWLDPEKTSPYEFYQFWINQDDRDVVKYLKYFTFLSHEEIEDLAEKTEKEPWKRAAQKKLAEEVTKFVHGEEGLKEAQMITDALFSGDIKNLSVTQIEQGLKNAPSAEAGSEKKNIVDFLVDTKIEPSKRQAREDVKNGAIYVNGDREQSVDFEVDPSSAFDGKYVIIRKGKRKYTLVTIK.

L-tyrosine is bound at residue tyrosine 38. Residues 43–52 (PTGDSLHIGH) carry the 'HIGH' region motif. L-tyrosine is bound by residues tyrosine 169 and glutamine 173. A 'KMSKS' region motif is present at residues 231 to 235 (KFGKS). Lysine 234 contributes to the ATP binding site. The region spanning 353 to 419 (KNIVDFLVDT…GKRKYTLVTI (67 aa)) is the S4 RNA-binding domain.

It belongs to the class-I aminoacyl-tRNA synthetase family. TyrS type 1 subfamily. Homodimer.

The protein resides in the cytoplasm. The enzyme catalyses tRNA(Tyr) + L-tyrosine + ATP = L-tyrosyl-tRNA(Tyr) + AMP + diphosphate + H(+). In terms of biological role, catalyzes the attachment of tyrosine to tRNA(Tyr) in a two-step reaction: tyrosine is first activated by ATP to form Tyr-AMP and then transferred to the acceptor end of tRNA(Tyr). The sequence is that of Tyrosine--tRNA ligase from Lactobacillus acidophilus (strain ATCC 700396 / NCK56 / N2 / NCFM).